Here is a 444-residue protein sequence, read N- to C-terminus: Methylenetetrahydrofolate--tRNA-(uracil-5-)-methyltransferase TrmFO (444 aa).

Residue 10 to 15 (GAGLAG) coordinates FAD.

This sequence belongs to the MnmG family. TrmFO subfamily. Requires FAD as cofactor.

It is found in the cytoplasm. The enzyme catalyses uridine(54) in tRNA + (6R)-5,10-methylene-5,6,7,8-tetrahydrofolate + NADH + H(+) = 5-methyluridine(54) in tRNA + (6S)-5,6,7,8-tetrahydrofolate + NAD(+). It catalyses the reaction uridine(54) in tRNA + (6R)-5,10-methylene-5,6,7,8-tetrahydrofolate + NADPH + H(+) = 5-methyluridine(54) in tRNA + (6S)-5,6,7,8-tetrahydrofolate + NADP(+). Its function is as follows. Catalyzes the folate-dependent formation of 5-methyl-uridine at position 54 (M-5-U54) in all tRNAs. The polypeptide is Methylenetetrahydrofolate--tRNA-(uracil-5-)-methyltransferase TrmFO (Streptococcus agalactiae serotype Ia (strain ATCC 27591 / A909 / CDC SS700)).